The sequence spans 493 residues: 3-octaprenyl-4-hydroxybenzoate carboxy-lyase (493 aa).

Asn172 provides a ligand contact to Mn(2+). Prenylated FMN contacts are provided by residues 175-177 (IYR), 189-191 (RWL), and 194-195 (RG). Glu238 is a Mn(2+) binding site. Residue Asp287 is the Proton donor of the active site.

The protein belongs to the UbiD family. As to quaternary structure, homohexamer. Prenylated FMN serves as cofactor. The cofactor is Mn(2+).

It is found in the cell membrane. The catalysed reaction is a 4-hydroxy-3-(all-trans-polyprenyl)benzoate + H(+) = a 2-(all-trans-polyprenyl)phenol + CO2. The protein operates within cofactor biosynthesis; ubiquinone biosynthesis. In terms of biological role, catalyzes the decarboxylation of 3-octaprenyl-4-hydroxy benzoate to 2-octaprenylphenol, an intermediate step in ubiquinone biosynthesis. This Shewanella putrefaciens (strain CN-32 / ATCC BAA-453) protein is 3-octaprenyl-4-hydroxybenzoate carboxy-lyase.